Reading from the N-terminus, the 388-residue chain is F-box protein At5g42460 (388 aa).

The region spanning 1–47 (MTIMSDLPRDLLAEILSRVPLTSLRAVRLTCKKWNDLSKDRSFLKKQ) is the F-box domain.

In Arabidopsis thaliana (Mouse-ear cress), this protein is F-box protein At5g42460.